Reading from the N-terminus, the 530-residue chain is Autoinducer-2 kinase (530 aa).

Belongs to the FGGY kinase family.

It localises to the cytoplasm. It catalyses the reaction (S)-4,5-dihydroxypentane-2,3-dione + ATP = (2S)-2-hydroxy-3,4-dioxopentyl phosphate + ADP + H(+). Functionally, catalyzes the phosphorylation of autoinducer-2 (AI-2) to phospho-AI-2, which subsequently inactivates the transcriptional regulator LsrR and leads to the transcription of the lsr operon. Phosphorylates the ring-open form of (S)-4,5-dihydroxypentane-2,3-dione (DPD), which is the precursor to all AI-2 signaling molecules, at the C5 position. This chain is Autoinducer-2 kinase, found in Yersinia pestis bv. Antiqua (strain Angola).